Reading from the N-terminus, the 401-residue chain is Probable sodium/metabolite cotransporter BASS5, chloroplastic (401 aa).

Residues 1–46 (MAPNAAVLVRPHIAGVHHLPTGRRLPRLAPPQAVSPPFSRQKGSVV) constitute a chloroplast transit peptide. Helical transmembrane passes span 93–113 (TIIP…PPSF), 122–142 (APAL…KDFI), 159–179 (FIIK…IFNL), 185–205 (AGIM…ATFL), 215–235 (IVMT…LSYF), 247–267 (GMMS…LLLN), 273–293 (LCSA…ALCV), 299–319 (INIK…LFAF), and 372–392 (LVGV…FALV).

It belongs to the bile acid:sodium symporter (BASS) (TC 2.A.28) family.

The protein localises to the membrane. It is found in the plastid. The protein resides in the chloroplast envelope. Its function is as follows. May function as sodium-coupled metabolite transporter across the chloroplast envelope. This chain is Probable sodium/metabolite cotransporter BASS5, chloroplastic (BASS5), found in Oryza sativa subsp. indica (Rice).